Consider the following 340-residue polypeptide: Uroporphyrinogen decarboxylase (340 aa).

Substrate contacts are provided by residues arginine 23–arginine 27, aspartate 72, tyrosine 147, threonine 202, and histidine 316.

Belongs to the uroporphyrinogen decarboxylase family. Homodimer.

Its subcellular location is the cytoplasm. It catalyses the reaction uroporphyrinogen III + 4 H(+) = coproporphyrinogen III + 4 CO2. It functions in the pathway porphyrin-containing compound metabolism; protoporphyrin-IX biosynthesis; coproporphyrinogen-III from 5-aminolevulinate: step 4/4. In terms of biological role, catalyzes the decarboxylation of four acetate groups of uroporphyrinogen-III to yield coproporphyrinogen-III. In Geobacter metallireducens (strain ATCC 53774 / DSM 7210 / GS-15), this protein is Uroporphyrinogen decarboxylase.